A 400-amino-acid polypeptide reads, in one-letter code: Unsaturated glucuronyl hydrolase (400 aa).

Residues 1–20 form the signal peptide; that stretch reads MRKLVYLVLVLGLTFLNVRC. Asp-120 functions as the Nucleophile in the catalytic mechanism. The active-site Proton donor is the Asp-181.

It belongs to the glycosyl hydrolase 88 family.

The protein localises to the cell surface. Unsaturated glucuronyl hydrolase involved in ulvan degradation. Ulvan is the main polysaccharide component of the Ulvales (green seaweed) cell wall. It is composed of disaccharide building blocks comprising 3-sulfated rhamnose (Rha3S) linked to D-glucuronic acid (GlcA), L-iduronic acid (IduA), or D-xylose (Xyl). Unsaturated glucuronyl hydrolase catalyzes the cleavage of the unsaturated 4-deoxy-L-threo-hex-4-enopyranosiduronic acid (deltaUA) at the non-reducing end of ulvan oligomers, thus forming 5-dehydro-4-deoxy-D-glucuronate. The protein is Unsaturated glucuronyl hydrolase of Formosa agariphila (strain DSM 15362 / KCTC 12365 / LMG 23005 / KMM 3901 / M-2Alg 35-1).